Here is a 215-residue protein sequence, read N- to C-terminus: Ribonuclease T (215 aa).

The 175-residue stretch at 20-194 (VVIDVETAGF…YDTLQTAKLF (175 aa)) folds into the Exonuclease domain. Mg(2+) is bound by residues Asp23, Glu25, His181, and Asp186. The Proton donor/acceptor role is filled by His181.

Belongs to the RNase T family. In terms of assembly, homodimer. The cofactor is Mg(2+).

Trims short 3' overhangs of a variety of RNA species, leaving a one or two nucleotide 3' overhang. Responsible for the end-turnover of tRNA: specifically removes the terminal AMP residue from uncharged tRNA (tRNA-C-C-A). Also appears to be involved in tRNA biosynthesis. In Yersinia pseudotuberculosis serotype I (strain IP32953), this protein is Ribonuclease T.